The primary structure comprises 634 residues: Transcription termination factor FttA (634 aa).

Residues 4–69 are KHa; it reads EEVLENIRKE…ISIRPDPSVL (66 aa). The interval 70–137 is KHb; the sequence is VEPEIAKQKI…WAPKPVRTPP (68 aa). The metallo-beta-lactamase N-terminus stretch occupies residues 179 to 381; sequence WIRVSFLGGA…LIIESTYGAY (203 aa). Zn(2+) is bound by residues histidine 240, histidine 242, aspartate 244, histidine 245, histidine 327, and aspartate 350. The segment at 382–575 is beta-Casp; the sequence is DDVLPEREEA…LQVYTIEGFS (194 aa). Residues 576-634 are metallo-beta-lactamase C-terminus; that stretch reads GHSDRKQLIKYIRRLKPSPEKIIMVHGEESKCLDFADTVRRLFKKQTYVPMNLDAIRVK. A Zn(2+)-binding site is contributed by histidine 601.

Belongs to the metallo-beta-lactamase superfamily. RNA-metabolizing metallo-beta-lactamase-like family. FttA subfamily. As to quaternary structure, homodimer. Interacts with RNA polymerase (RNAP), interacts with the Spt4-Spt5 complex. Zn(2+) is required as a cofactor.

With respect to regulation, optimal NaCl concentration is 100 mM for nuclease activity on RNA. In terms of biological role, terminates transcription on the whole genome. Termination is linked to FttA-mediated RNA cleavage and does not require NTP hydrolysis. Cleaves endonucleolytically at the RNA exit channel of RNA polymerase (RNAP); the 5'-3' exonuclease activity of this protein degrades the nascent RNA released from RNAP. Its function is as follows. An endoribonuclease with no apparent exonuclease activity, has low activity on single-stranded DNA (endodeoxyribonuclease, endoDNase). The sequence is that of Transcription termination factor FttA from Methanocaldococcus jannaschii (strain ATCC 43067 / DSM 2661 / JAL-1 / JCM 10045 / NBRC 100440) (Methanococcus jannaschii).